Reading from the N-terminus, the 423-residue chain is Replication factor C large subunit (423 aa).

Position 63–70 (63–70 (GPPGIGKT)) interacts with ATP.

Belongs to the activator 1 small subunits family. RfcL subfamily. In terms of assembly, heteromultimer composed of small subunits (RfcS) and large subunits (RfcL).

In terms of biological role, part of the RFC clamp loader complex which loads the PCNA sliding clamp onto DNA. This chain is Replication factor C large subunit, found in Pyrobaculum islandicum (strain DSM 4184 / JCM 9189 / GEO3).